The following is a 308-amino-acid chain: Lipoyl synthase (308 aa).

[4Fe-4S] cluster is bound by residues C48, C53, C59, C74, C78, C81, and S287. The 218-residue stretch at 60–277 (WSRHTATYLA…RSVGEALGLF (218 aa)) folds into the Radical SAM core domain.

This sequence belongs to the radical SAM superfamily. Lipoyl synthase family. It depends on [4Fe-4S] cluster as a cofactor.

The protein resides in the cytoplasm. It carries out the reaction [[Fe-S] cluster scaffold protein carrying a second [4Fe-4S](2+) cluster] + N(6)-octanoyl-L-lysyl-[protein] + 2 oxidized [2Fe-2S]-[ferredoxin] + 2 S-adenosyl-L-methionine + 4 H(+) = [[Fe-S] cluster scaffold protein] + N(6)-[(R)-dihydrolipoyl]-L-lysyl-[protein] + 4 Fe(3+) + 2 hydrogen sulfide + 2 5'-deoxyadenosine + 2 L-methionine + 2 reduced [2Fe-2S]-[ferredoxin]. Its pathway is protein modification; protein lipoylation via endogenous pathway; protein N(6)-(lipoyl)lysine from octanoyl-[acyl-carrier-protein]: step 2/2. Catalyzes the radical-mediated insertion of two sulfur atoms into the C-6 and C-8 positions of the octanoyl moiety bound to the lipoyl domains of lipoate-dependent enzymes, thereby converting the octanoylated domains into lipoylated derivatives. The protein is Lipoyl synthase of Chlamydia muridarum (strain MoPn / Nigg).